Here is a 156-residue protein sequence, read N- to C-terminus: Small ribosomal subunit protein uS7 (156 aa).

This sequence belongs to the universal ribosomal protein uS7 family. Part of the 30S ribosomal subunit. Contacts proteins S9 and S11.

In terms of biological role, one of the primary rRNA binding proteins, it binds directly to 16S rRNA where it nucleates assembly of the head domain of the 30S subunit. Is located at the subunit interface close to the decoding center, probably blocks exit of the E-site tRNA. This Streptococcus pneumoniae serotype 4 (strain ATCC BAA-334 / TIGR4) protein is Small ribosomal subunit protein uS7.